Here is a 1067-residue protein sequence, read N- to C-terminus: SURP and G-patch domain-containing protein 2 (1067 aa).

Phosphoserine is present on Ser93. Basic and acidic residues predominate over residues 177 to 189 (KESRDYDLDHPGE). The tract at residues 177 to 199 (KESRDYDLDHPGEVDSVSRSSGQ) is disordered. A Phosphoserine modification is found at Ser206. Lys219 is covalently cross-linked (Glycyl lysine isopeptide (Lys-Gly) (interchain with G-Cter in SUMO2)). Position 265 is a phosphothreonine (Thr265). Residues Ser267 and Ser586 each carry the phosphoserine modification. The stretch at 573 to 616 (IDQLVMRVIQGRLSPRERTLLLQDPAYWFLSDESSLEYKYYKLK) is one SURP motif 1 repeat. Residues 668–767 (SQGPRGLKAK…CPSANMDAKT (100 aa)) form a disordered region. A compositionally biased stretch (polar residues) spans 680 to 691 (TTAQQTSLSSGT). At Ser740 the chain carries Phosphoserine. Thr744 is subject to Phosphothreonine. Residues 770–813 (TAEKLARFVAQVGPEIEQFSIENSTDNPDLWFLHDQSSSAFKFY) form an SURP motif 2 repeat. Positions 825 to 840 (SFQSTGEAGDSVQSPT) are enriched in polar residues. Disordered stretches follow at residues 825–944 (SFQS…KSLK) and 967–991 (RIAY…EFSQ). A Phosphoserine modification is found at Ser838. The span at 843 to 856 (KEGKGEPQEGHPEQ) shows a compositional bias: basic and acidic residues. The span at 866 to 883 (LPEEEEEDEEESEDEGGE) shows a compositional bias: acidic residues. The span at 919-931 (ASTPGLSQASSGS) shows a compositional bias: polar residues. The segment covering 975–984 (GRPIAKKKKP) has biased composition (basic residues). Residues 980–985 (KKKKPK) carry the Nuclear localization signal motif. The 47-residue stretch at 996–1042 (DKNVGFQMLQKMGWKEGHGLGSLGKGIREPVSVGALSEGEGLGADGP) folds into the G-patch domain.

It is found in the nucleus. Its function is as follows. May play a role in mRNA splicing. This Mus musculus (Mouse) protein is SURP and G-patch domain-containing protein 2 (Sugp2).